Here is a 268-residue protein sequence, read N- to C-terminus: Hydroxypyruvate/pyruvate aldolase (268 aa).

His-48 acts as the Proton acceptor in catalysis. Residues Glu-152 and Asp-178 each contribute to the a divalent metal cation site.

Belongs to the HpcH/HpaI aldolase family. The cofactor is Mn(2+). Mg(2+) is required as a cofactor. Co(2+) serves as cofactor.

The enzyme catalyses D-glyceraldehyde + 3-hydroxypyruvate = (3R,4S,5R)-3,4,5,6-tetrahydroxy-2-oxohexanoate. It carries out the reaction D-glyceraldehyde + 3-hydroxypyruvate = 2-dehydro-D-gluconate. It catalyses the reaction D-glyceraldehyde + 3-hydroxypyruvate = 2-dehydro-D-galactonate. The catalysed reaction is D-glyceraldehyde + pyruvate = 2-dehydro-3-deoxy-L-galactonate. The enzyme catalyses 2-dehydro-3-deoxy-D-gluconate = D-glyceraldehyde + pyruvate. Its function is as follows. Aldolase which can catalyze in vitro the aldolisation reaction between hydroxypyruvate (HPA) or pyruvate (PA) and D-glyceraldehyde (D-GA). The condensation of hydroxypyruvate and D-glyceraldehyde produces (3R,4S,5R)-3,4,5,6-tetrahydroxy-2-oxohexanoate as the major product, 2-dehydro-D-gluconate and 2-dehydro-D-galactonate. The condensation of pyruvate and D-glyceraldehyde produces 2-dehydro-3-deoxy-L-galactonate as the major product and 2-dehydro-3-deoxy-D-gluconate. Also catalyzes the retro-aldol type decarboxylation of oxaloacetate, a general property of known pyruvate aldolases. The protein is Hydroxypyruvate/pyruvate aldolase of Pseudomonas aeruginosa.